A 404-amino-acid polypeptide reads, in one-letter code: Protein translocase subunit SecF (404 aa).

The next 6 helical transmembrane spans lie at 15-35 (KWYF…SMGA), 225-245 (LLAT…RFEL), 246-266 (IYGI…VGAF), 275-295 (LTVV…TIVV), 327-347 (ILTS…GGEV), and 355-375 (LVIG…PMLV).

It belongs to the SecD/SecF family. SecF subfamily. Forms a complex with SecD. Part of the essential Sec protein translocation apparatus which comprises SecA, SecYEG and auxiliary proteins SecDF. Other proteins may also be involved.

It is found in the cell inner membrane. Part of the Sec protein translocase complex. Interacts with the SecYEG preprotein conducting channel. SecDF uses the proton motive force (PMF) to complete protein translocation after the ATP-dependent function of SecA. This chain is Protein translocase subunit SecF, found in Koribacter versatilis (strain Ellin345).